Here is a 386-residue protein sequence, read N- to C-terminus: Paralemmin-1 (386 aa).

Positions 4 to 115 (VEANTLQQER…TKENLAEAAA (112 aa)) form a coiled coil. Disordered stretches follow at residues 21 to 40 (RKRQTEIENKRRQLEDDRRQ), 51 to 149 (ERWL…PMKA), 240 to 290 (EATA…TMIF), and 321 to 378 (DAES…AKKQ). Basic and acidic residues-rich tracts occupy residues 24 to 40 (QTEIENKRRQLEDDRRQ) and 68 to 95 (AMKKQMQEDEVKTKELEETIQRLERELE). Residues 97–116 (LENSSSVTSTKENLAEAAAP) are compositionally biased toward low complexity. 3 stretches are compositionally biased toward basic and acidic residues: residues 259-282 (PRREITGLQAKPRENSTEGAEPSR), 322-334 (AESKAEPEGKDHA), and 365-377 (EAKEAEPDMDAKK). 2 S-palmitoyl cysteine lipidation sites follow: cysteine 380 and cysteine 382. At cysteine 383 the chain carries Cysteine methyl ester. Cysteine 383 is lipidated: S-farnesyl cysteine. A propeptide spans 384–386 (TVM) (removed in mature form).

This sequence belongs to the paralemmin family. In terms of assembly, interacts with dopamine receptor DRD3. Phosphorylated. In terms of tissue distribution, expressed in the lens (at protein level). Highly expressed in forebrain and cerebellum with lower expression in adrenal gland and heart. Expression weak or undetectable in other tissues.

It localises to the cell membrane. The protein localises to the cell projection. The protein resides in the filopodium membrane. Its subcellular location is the axon. It is found in the dendrite. It localises to the dendritic spine. The protein localises to the basolateral cell membrane. The protein resides in the apicolateral cell membrane. Its function is as follows. Involved in plasma membrane dynamics and cell process formation. Isoform 1 and isoform 2 are necessary for axonal and dendritic filopodia induction, for dendritic spine maturation and synapse formation in a palmitoylation-dependent manner. The sequence is that of Paralemmin-1 (PALM) from Gallus gallus (Chicken).